Here is a 145-residue protein sequence, read N- to C-terminus: Aegerolysin Aa-Pri1 (145 aa).

Positions 1-8 (MDSNKDER) are excised as a propeptide.

The protein belongs to the aegerolysin family.

The chain is Aegerolysin Aa-Pri1 (AA-PRI1) from Cyclocybe aegerita (Black poplar mushroom).